We begin with the raw amino-acid sequence, 372 residues long: Queuine tRNA-ribosyltransferase (372 aa).

Aspartate 92 functions as the Proton acceptor in the catalytic mechanism. Residues 92–96 (DSGGY), aspartate 146, glutamine 188, and glycine 215 each bind substrate. Residues 246 to 252 (GIGTIRE) are RNA binding. The active-site Nucleophile is the aspartate 265. The interval 270 to 274 (TRLGR) is RNA binding; important for wobble base 34 recognition. Positions 303, 305, 308, and 334 each coordinate Zn(2+).

Belongs to the queuine tRNA-ribosyltransferase family. As to quaternary structure, homodimer. Within each dimer, one monomer is responsible for RNA recognition and catalysis, while the other monomer binds to the replacement base PreQ1. The cofactor is Zn(2+).

The enzyme catalyses 7-aminomethyl-7-carbaguanine + guanosine(34) in tRNA = 7-aminomethyl-7-carbaguanosine(34) in tRNA + guanine. Its pathway is tRNA modification; tRNA-queuosine biosynthesis. Functionally, catalyzes the base-exchange of a guanine (G) residue with the queuine precursor 7-aminomethyl-7-deazaguanine (PreQ1) at position 34 (anticodon wobble position) in tRNAs with GU(N) anticodons (tRNA-Asp, -Asn, -His and -Tyr). Catalysis occurs through a double-displacement mechanism. The nucleophile active site attacks the C1' of nucleotide 34 to detach the guanine base from the RNA, forming a covalent enzyme-RNA intermediate. The proton acceptor active site deprotonates the incoming PreQ1, allowing a nucleophilic attack on the C1' of the ribose to form the product. After dissociation, two additional enzymatic reactions on the tRNA convert PreQ1 to queuine (Q), resulting in the hypermodified nucleoside queuosine (7-(((4,5-cis-dihydroxy-2-cyclopenten-1-yl)amino)methyl)-7-deazaguanosine). In Prochlorococcus marinus (strain SARG / CCMP1375 / SS120), this protein is Queuine tRNA-ribosyltransferase.